The primary structure comprises 146 residues: Hemoglobin subunit beta (146 aa).

The Globin domain maps to 2–146 (FLTAEEKGLV…VASALAHRYH (145 aa)). S44 is subject to Phosphoserine. N6-acetyllysine is present on K59. Heme b is bound at residue H63. The residue at position 82 (K82) is an N6-acetyllysine. Residue H92 participates in heme b binding. C93 bears the S-nitrosocysteine mark.

Belongs to the globin family. In terms of assembly, heterotetramer of two alpha chains and two beta chains. As to expression, red blood cells.

In terms of biological role, involved in oxygen transport from the lung to the various peripheral tissues. This Paguma larvata (Masked palm civet) protein is Hemoglobin subunit beta (HBB).